Reading from the N-terminus, the 435-residue chain is Transcription factor gkaF (435 aa).

Positions 1-19 are enriched in basic and acidic residues; the sequence is MGRPQRGDTAKERRERQDK. 3 disordered regions span residues 1–40, 115–158, and 231–257; these read MGRP…TVDW, STTA…SSQS, and FSSE…FLAP. Over residues 28–40 the composition is skewed to polar residues; that stretch reads PISQSGLSDTVDW. Positions 143–158 are enriched in low complexity; sequence SQSSDSSKPSSTSSQS.

The protein resides in the nucleus. Transcription factor; part of the gene cluster that mediates the biosynthesis of GKK1032, fungal natural products containing a macrocyclic para-cyclophane connected to a decahydrofluorene ring system that show potent antitumor activities. This is Transcription factor gkaF from Penicillium citrinum.